The primary structure comprises 91 residues: UPF0358 protein SAB0977 (91 aa).

It belongs to the UPF0358 family.

The protein is UPF0358 protein SAB0977 of Staphylococcus aureus (strain bovine RF122 / ET3-1).